The sequence spans 396 residues: S-adenosylmethionine synthase (396 aa).

H15 lines the ATP pocket. D17 serves as a coordination point for Mg(2+). A K(+)-binding site is contributed by E43. E56 and Q99 together coordinate L-methionine. The tract at residues 99–109 (QSPDIALGVNR) is flexible loop. ATP is bound by residues 175–177 (DGK), 241–242 (RF), D250, 256–257 (RK), A273, and K277. D250 contacts L-methionine. Residue K281 participates in L-methionine binding.

This sequence belongs to the AdoMet synthase family. In terms of assembly, homotetramer; dimer of dimers. Mg(2+) is required as a cofactor. It depends on K(+) as a cofactor.

The protein resides in the cytoplasm. It carries out the reaction L-methionine + ATP + H2O = S-adenosyl-L-methionine + phosphate + diphosphate. It participates in amino-acid biosynthesis; S-adenosyl-L-methionine biosynthesis; S-adenosyl-L-methionine from L-methionine: step 1/1. In terms of biological role, catalyzes the formation of S-adenosylmethionine (AdoMet) from methionine and ATP. The overall synthetic reaction is composed of two sequential steps, AdoMet formation and the subsequent tripolyphosphate hydrolysis which occurs prior to release of AdoMet from the enzyme. This is S-adenosylmethionine synthase from Carboxydothermus hydrogenoformans (strain ATCC BAA-161 / DSM 6008 / Z-2901).